Here is a 379-residue protein sequence, read N- to C-terminus: MYQVDLPPDPKEVAAIEARRNQEREQQSRFFNVRTRVMGVDVEALNNQVEERKLQEATERSKEAAYGTNQVRYDLVAQMLEKEQAERTRRLAKKVQNFREQRQKLRNRCELDFWNSNQLWREFPAYLGDNAPYYGQASLQCFSGEDLERATYLRMQQEQFQYSLERQLQEQQQARVDENCADMLNDQLRLAMDMRAAQLAKLEESCRIAMMAATASANKAQAVKLAEQQGQEHQRQQEANLVEVQNQITSDLLTENPQVAQNPVAPHRVLPYCWKGMTPEQRATIRKVQETQHHEKEAQRQAEQALDAKWESQAINLAQAAKELEEQERELCAEFRRGLGSFNQQLAMEQNAQQNYLNSIIYTNQPTAQYHLQFNTSSR.

2 coiled-coil regions span residues 43–111 and 285–337; these read EALN…RCEL and IRKV…EFRR.

It belongs to the RIB43A family. In terms of assembly, microtubule inner protein component of sperm flagellar doublet microtubules.

Its subcellular location is the cytoplasm. It is found in the cytoskeleton. The protein localises to the flagellum axoneme. This is RIB43A-like with coiled-coils protein 1 (RIBC1) from Bos taurus (Bovine).